Consider the following 189-residue polypeptide: uncharacterized protein (189 aa).

A coiled-coil region spans residues 31–54; sequence KCENIDDLANRYEVSKQEVEKVFK. 4 consecutive EF-hand domains span residues 47-82, 83-118, 120-155, and 157-189; these read QEVE…LGID, VSPK…KIKL, TVKA…TVST, and ITVK…CQTV. Ca(2+)-binding residues include aspartate 60, aspartate 62, serine 64, threonine 66, glutamate 71, aspartate 96, serine 98, aspartate 100, glutamine 102, glutamate 107, aspartate 133, asparagine 135, glutamate 137, and glutamate 144.

This is an uncharacterized protein from Caenorhabditis elegans.